The chain runs to 710 residues: Ephexin-1 (710 aa).

Residues 1–20 (METKNSEDWGKPQRKSESSS) show a composition bias toward basic and acidic residues. The disordered stretch occupies residues 1-146 (METKNSEDWG…TPEECPALTD (146 aa)). Positions 1–272 (METKNSEDWG…VLDILQPEEI (272 aa)) are regulatory region; modulates activity toward RHOA, RAC1 and CDC42. The span at 123–137 (QEASESSSTPGNGTT) shows a compositional bias: polar residues. Tyr177 carries the phosphotyrosine modification. A disordered region spans residues 192 to 234 (RRQQDAEIQGNSDGSQVGEDAGEEEEEEEEGEEEELASPPERR). The segment covering 211-227 (DAGEEEEEEEEGEEEEL) has biased composition (acidic residues). The region spanning 273–457 (RLQEAMFELV…EMVVKACNEG (185 aa)) is the DH domain. Positions 489 to 601 (WLLKQGELQQ…WMTSLAPNRR (113 aa)) constitute a PH domain. An SH3 domain is found at 612–673 (LDCPQVQCVH…PSSMTEEILN (62 aa)). Over residues 688-699 (HKMEDPQRSQNK) the composition is skewed to basic and acidic residues. The tract at residues 688-710 (HKMEDPQRSQNKDRRKLGSRNRQ) is disordered. Over residues 700–710 (DRRKLGSRNRQ) the composition is skewed to basic residues.

In terms of assembly, interacts with CDK5R1 and EPHA4; activated by EPHA4 through the CDK5 kinase. In terms of processing, src-dependent phosphorylation at Tyr-177 upon EPHA4 activation increases the guanine exchange factor activity toward RHOA. Phosphorylation by CDK5 upon EPHA4 activation by EFNA1 may regulate dendritic spine morphogenesis. As to expression, highly expressed in brain and to a lower extent in eye.

The protein localises to the cytoplasm. Its subcellular location is the membrane. It localises to the cell projection. It is found in the growth cone. Functionally, acts as a guanine nucleotide exchange factor (GEF) which differentially activates the GTPases RHOA, RAC1 and CDC42. Plays a role in axon guidance regulating ephrin-induced growth cone collapse and dendritic spine morphogenesis. Upon activation by ephrin through EPHA4, the GEF activity switches toward RHOA resulting in its activation. Activated RHOA promotes cone retraction at the expense of RAC1- and CDC42-stimulated growth cone extension. This Mus musculus (Mouse) protein is Ephexin-1 (Ngef).